The sequence spans 536 residues: Phosphoenolpyruvate carboxykinase (ATP) (536 aa).

Positions 61, 195, and 201 each coordinate substrate. Residues Lys201, His220, and 236-244 (GLSGTGKTT) each bind ATP. Lys201 and His220 together coordinate Mn(2+). Residue Asp257 coordinates Mn(2+). Positions 285, 322, and 447 each coordinate ATP. Arg322 is a substrate binding site.

The protein belongs to the phosphoenolpyruvate carboxykinase (ATP) family. Requires Mn(2+) as cofactor.

It is found in the cytoplasm. It catalyses the reaction oxaloacetate + ATP = phosphoenolpyruvate + ADP + CO2. It participates in carbohydrate biosynthesis; gluconeogenesis. Involved in the gluconeogenesis. Catalyzes the conversion of oxaloacetate (OAA) to phosphoenolpyruvate (PEP) through direct phosphoryl transfer between the nucleoside triphosphate and OAA. The protein is Phosphoenolpyruvate carboxykinase (ATP) of Rhizobium rhizogenes (strain K84 / ATCC BAA-868) (Agrobacterium radiobacter).